A 52-amino-acid chain; its full sequence is ATP synthase protein 8 (52 aa).

Residues 10–30 form a helical membrane-spanning segment; the sequence is FLMSLMIMMILIFMTINFYFF.

Belongs to the ATPase protein 8 family. As to quaternary structure, F-type ATPases have 2 components, CF(1) - the catalytic core - and CF(0) - the membrane proton channel.

The protein localises to the mitochondrion membrane. In terms of biological role, mitochondrial membrane ATP synthase (F(1)F(0) ATP synthase or Complex V) produces ATP from ADP in the presence of a proton gradient across the membrane which is generated by electron transport complexes of the respiratory chain. F-type ATPases consist of two structural domains, F(1) - containing the extramembraneous catalytic core and F(0) - containing the membrane proton channel, linked together by a central stalk and a peripheral stalk. During catalysis, ATP synthesis in the catalytic domain of F(1) is coupled via a rotary mechanism of the central stalk subunits to proton translocation. Part of the complex F(0) domain. Minor subunit located with subunit a in the membrane. The sequence is that of ATP synthase protein 8 (MT-ATP8) from Rhipicephalus sanguineus (Brown dog tick).